A 250-amino-acid polypeptide reads, in one-letter code: TBC1 domain family member 26 (250 aa).

One can recognise a Rab-GAP TBC domain in the interval 101 to 250; that stretch reads VIPLAVRGRA…RCCTSPSQRS (150 aa).

Its function is as follows. May act as a GTPase-activating protein for Rab family protein(s). The sequence is that of TBC1 domain family member 26 (TBC1D26) from Homo sapiens (Human).